An 89-amino-acid polypeptide reads, in one-letter code: Small ribosomal subunit protein uS15 (89 aa).

Belongs to the universal ribosomal protein uS15 family. Part of the 30S ribosomal subunit. Forms a bridge to the 50S subunit in the 70S ribosome, contacting the 23S rRNA.

One of the primary rRNA binding proteins, it binds directly to 16S rRNA where it helps nucleate assembly of the platform of the 30S subunit by binding and bridging several RNA helices of the 16S rRNA. In terms of biological role, forms an intersubunit bridge (bridge B4) with the 23S rRNA of the 50S subunit in the ribosome. This Pseudomonas putida (strain ATCC 700007 / DSM 6899 / JCM 31910 / BCRC 17059 / LMG 24140 / F1) protein is Small ribosomal subunit protein uS15.